Here is a 190-residue protein sequence, read N- to C-terminus: Dirigent protein 15 (190 aa).

An N-terminal signal peptide occupies residues 1–19 (MKSTLIIFFTLCLSMAVMA). 2 N-linked (GlcNAc...) asparagine glycosylation sites follow: N63 and N128.

It belongs to the plant dirigent protein family. In terms of assembly, homodimer.

Its subcellular location is the secreted. It localises to the extracellular space. It is found in the apoplast. In terms of biological role, dirigent proteins impart stereoselectivity on the phenoxy radical-coupling reaction, yielding optically active lignans from two molecules of coniferyl alcohol in the biosynthesis of lignans, flavonolignans, and alkaloids and thus plays a central role in plant secondary metabolism. This is Dirigent protein 15 (DIR15) from Arabidopsis thaliana (Mouse-ear cress).